Here is a 381-residue protein sequence, read N- to C-terminus: Cytochrome b (381 aa).

The next 4 helical transmembrane spans lie at 34 to 54 (FGSLLGLCLIIQILTGLFLAM), 78 to 99 (WLIRNIHANGASLFFICVYLHI), 114 to 134 (WNIGVILLFLLMATAFVGYVL), and 179 to 199 (FFAFHFLLPFLILALTIIHLL). Heme b contacts are provided by histidine 84 and histidine 98. The heme b site is built by histidine 183 and histidine 197. Position 202 (histidine 202) interacts with a ubiquinone. A run of 4 helical transmembrane segments spans residues 227-247 (YKDLLGFFVMIFFLTTLALFM), 289-309 (LGGVLALLFSIFILMLVPLLH), 321-341 (LTQIFFWLLVANSIILTWIGG), and 348-368 (FITVGQIASVSYFSLFLIIMP).

This sequence belongs to the cytochrome b family. The cytochrome bc1 complex contains 3 respiratory subunits (MT-CYB, CYC1 and UQCRFS1), 2 core proteins (UQCRC1 and UQCRC2) and probably 6 low-molecular weight proteins. Requires heme b as cofactor.

Its subcellular location is the mitochondrion inner membrane. Functionally, component of the ubiquinol-cytochrome c reductase complex (complex III or cytochrome b-c1 complex) that is part of the mitochondrial respiratory chain. The b-c1 complex mediates electron transfer from ubiquinol to cytochrome c. Contributes to the generation of a proton gradient across the mitochondrial membrane that is then used for ATP synthesis. The protein is Cytochrome b (mt-cyb) of Sphyrna tiburo tiburo (Hammerhead shark).